The primary structure comprises 351 residues: Thiamine-phosphate synthase (351 aa).

The unknown stretch occupies residues 1 to 127 (MQNLAPASEG…SETAKALRYR (127 aa)). The segment at 64-84 (RAARQTDQDPGTALSHPQERD) is disordered. The segment at 128 to 351 (VYILEQALTL…LRRLSQGEPS (224 aa)) is thiamine-phosphate synthase. Residues 178-182 (QYRDK) and Asn210 contribute to the 4-amino-2-methyl-5-(diphosphooxymethyl)pyrimidine site. Mg(2+) is bound by residues Asp211 and Asp230. 4-amino-2-methyl-5-(diphosphooxymethyl)pyrimidine is bound at residue Ser249. Residue 275–277 (TPT) coordinates 2-[(2R,5Z)-2-carboxy-4-methylthiazol-5(2H)-ylidene]ethyl phosphate. Residue Lys278 participates in 4-amino-2-methyl-5-(diphosphooxymethyl)pyrimidine binding. Residue Gly305 coordinates 2-[(2R,5Z)-2-carboxy-4-methylthiazol-5(2H)-ylidene]ethyl phosphate.

The protein belongs to the thiamine-phosphate synthase family. It depends on Mg(2+) as a cofactor.

The enzyme catalyses 2-[(2R,5Z)-2-carboxy-4-methylthiazol-5(2H)-ylidene]ethyl phosphate + 4-amino-2-methyl-5-(diphosphooxymethyl)pyrimidine + 2 H(+) = thiamine phosphate + CO2 + diphosphate. It catalyses the reaction 2-(2-carboxy-4-methylthiazol-5-yl)ethyl phosphate + 4-amino-2-methyl-5-(diphosphooxymethyl)pyrimidine + 2 H(+) = thiamine phosphate + CO2 + diphosphate. The catalysed reaction is 4-methyl-5-(2-phosphooxyethyl)-thiazole + 4-amino-2-methyl-5-(diphosphooxymethyl)pyrimidine + H(+) = thiamine phosphate + diphosphate. It participates in cofactor biosynthesis; thiamine diphosphate biosynthesis; thiamine phosphate from 4-amino-2-methyl-5-diphosphomethylpyrimidine and 4-methyl-5-(2-phosphoethyl)-thiazole: step 1/1. Condenses 4-methyl-5-(beta-hydroxyethyl)thiazole monophosphate (THZ-P) and 2-methyl-4-amino-5-hydroxymethyl pyrimidine pyrophosphate (HMP-PP) to form thiamine monophosphate (TMP). The polypeptide is Thiamine-phosphate synthase (Thermosynechococcus vestitus (strain NIES-2133 / IAM M-273 / BP-1)).